Reading from the N-terminus, the 281-residue chain is 1-acyl-sn-glycerol-3-phosphate acyltransferase (281 aa).

3 helical membrane-spanning segments follow: residues 40-60, 71-91, and 110-130; these read IFVC…IMVL, LGNL…GIPI, and ASPI…VGVA. The HXXXXD motif motif lies at 109-114; sequence HASPID.

It belongs to the 1-acyl-sn-glycerol-3-phosphate acyltransferase family.

It localises to the membrane. The enzyme catalyses a 1-acyl-sn-glycero-3-phosphate + an acyl-CoA = a 1,2-diacyl-sn-glycero-3-phosphate + CoA. Its pathway is phospholipid metabolism; CDP-diacylglycerol biosynthesis; CDP-diacylglycerol from sn-glycerol 3-phosphate: step 2/3. In terms of biological role, converts lysophosphatidic acid (LPA) into phosphatidic acid by incorporating acyl moiety at the 2 position. This enzyme uses erucoyl-CoA as an acyl donor. The polypeptide is 1-acyl-sn-glycerol-3-phosphate acyltransferase (PLSC) (Limnanthes douglasii (Douglas' meadowfoam)).